The sequence spans 255 residues: Pimeloyl-[acyl-carrier protein] methyl ester esterase (255 aa).

The AB hydrolase-1 domain occupies 16 to 242 (LVLLHGWGMN…SSHAPFITEP (227 aa)). Substrate-binding positions include W22, 82-83 (SL), and 143-147 (FMALQ). Catalysis depends on S82, which acts as the Nucleophile. Residues D207 and H235 contribute to the active site. H235 serves as a coordination point for substrate.

This sequence belongs to the AB hydrolase superfamily. Carboxylesterase BioH family. Monomer.

It localises to the cytoplasm. The catalysed reaction is 6-carboxyhexanoyl-[ACP] methyl ester + H2O = 6-carboxyhexanoyl-[ACP] + methanol + H(+). It functions in the pathway cofactor biosynthesis; biotin biosynthesis. The physiological role of BioH is to remove the methyl group introduced by BioC when the pimeloyl moiety is complete. It allows to synthesize pimeloyl-ACP via the fatty acid synthetic pathway through the hydrolysis of the ester bonds of pimeloyl-ACP esters. This Vibrio vulnificus (strain YJ016) protein is Pimeloyl-[acyl-carrier protein] methyl ester esterase.